Consider the following 998-residue polypeptide: Bifunctional glutamine synthetase adenylyltransferase/adenylyl-removing enzyme (998 aa).

The adenylyl removase stretch occupies residues 1-487 (MVVTKPATQR…LHAKLFYQPL (487 aa)). The interval 492–998 (GPAGLEIRHG…KAVVRKVFGS (507 aa)) is adenylyl transferase.

It belongs to the GlnE family. Mg(2+) is required as a cofactor.

The catalysed reaction is [glutamine synthetase]-O(4)-(5'-adenylyl)-L-tyrosine + phosphate = [glutamine synthetase]-L-tyrosine + ADP. The enzyme catalyses [glutamine synthetase]-L-tyrosine + ATP = [glutamine synthetase]-O(4)-(5'-adenylyl)-L-tyrosine + diphosphate. Its function is as follows. Involved in the regulation of glutamine synthetase GlnA, a key enzyme in the process to assimilate ammonia. When cellular nitrogen levels are high, the C-terminal adenylyl transferase (AT) inactivates GlnA by covalent transfer of an adenylyl group from ATP to specific tyrosine residue of GlnA, thus reducing its activity. Conversely, when nitrogen levels are low, the N-terminal adenylyl removase (AR) activates GlnA by removing the adenylyl group by phosphorolysis, increasing its activity. The regulatory region of GlnE binds the signal transduction protein PII (GlnB) which indicates the nitrogen status of the cell. The polypeptide is Bifunctional glutamine synthetase adenylyltransferase/adenylyl-removing enzyme (Mycobacterium avium (strain 104)).